The sequence spans 648 residues: Protein kinase YegI (648 aa).

Residues 15–302 (TTLGRELGKG…KAWVAALDSL (288 aa)) form the Protein kinase domain. ATP-binding positions include 21–29 (LGKGGEGAV) and lysine 41. Catalysis depends on aspartate 143, which acts as the Proton acceptor.

In terms of processing, autophosphorylated. Dephosphorylated by PphC.

Its function is as follows. Probable serine/threonine kinase. This is Protein kinase YegI (yegI) from Escherichia coli (strain K12).